Reading from the N-terminus, the 436-residue chain is Gustatory receptor for sugar taste 61a (436 aa).

The Cytoplasmic segment spans residues 1-78 (MSRTSDDIRK…PQDVKFKVRS (78 aa)). Residues 79–99 (IGLAVTGLFLLLGGMKTLVGA) traverse the membrane as a helical segment. Over 100–111 (NILFTEGLNAKN) the chain is Extracellular. A helical transmembrane segment spans residues 112–132 (IVGLVFLIVGMVNWLNFVGFA). The Cytoplasmic portion of the chain corresponds to 133–164 (RSWSHIMLPWSSVDILMLFPPYKRGKRSLRSK). Residues 165–185 (VNVLALSVVVLAVGDHMLYYA) traverse the membrane as a helical segment. Residues 186–214 (SGYCSYSMHILQCHTNHSRITFGLYLEKE) lie on the Extracellular side of the membrane. Asn-201 carries an N-linked (GlcNAc...) asparagine glycan. Residues 215 to 235 (FSDIMFIMPFNIFSMCYGFWL) traverse the membrane as a helical segment. At 236–237 (NG) the chain is on the cytoplasmic side. The chain crosses the membrane as a helical span at residues 238 to 258 (AFTFLWNFMDIFIVMTSIGLA). Residues 259-304 (QRFQQFAARVGALEGRHVPEALWYDIRRDHIRLCELASLVEASMSN) are Extracellular-facing. The chain crosses the membrane as a helical span at residues 305 to 325 (IVFVSCANNVYVICNQALAIF). Residues 326 to 334 (TKLRHPINY) are Cytoplasmic-facing. Residues 335–355 (VYFWYSLIFLLARTSLVFMTA) form a helical membrane-spanning segment. Topologically, residues 356–436 (SKIHDASLLP…AKSHKGLRCA (81 aa)) are extracellular.

It belongs to the insect chemoreceptor superfamily. Gustatory receptor (GR) family. Gr5a subfamily. In terms of tissue distribution, expressed in sweet sensing neurons of classical chemosensory sensilla, but also in two supersensitive neurons of atypical taste sensilla.

The protein resides in the cell membrane. In terms of biological role, one of the few identified sugar gustatory receptors identified so far with glucose being its primary ligand and which mediates acceptance behavior. This chain is Gustatory receptor for sugar taste 61a (Gr61a), found in Drosophila melanogaster (Fruit fly).